The sequence spans 822 residues: Serine/threonine-protein phosphatase 4 regulatory subunit 3 (822 aa).

The WH1 domain maps to 1 to 100 (MTDTRRRVKV…DEIWEKICQV (100 aa)). The segment at 744 to 822 (TSQLSASGHP…PLTKKARLGS (79 aa)) is disordered. The segment covering 761–774 (SPGSPESPGSVSKS) has biased composition (low complexity). Positions 793-808 (YPDDDEEDDDNDEEEK) are enriched in acidic residues.

The protein belongs to the SMEK family. As to quaternary structure, serine/threonine-protein phosphatase 4 (PP4) occurs in different assemblies of the catalytic and one or more regulatory subunits.

In terms of biological role, regulatory subunit of serine/threonine-protein phosphatase 4. In Xenopus laevis (African clawed frog), this protein is Serine/threonine-protein phosphatase 4 regulatory subunit 3 (smek1).